Reading from the N-terminus, the 81-residue chain is Putative membrane protein insertion efficiency factor (81 aa).

The segment at 59–81 (PWNPGGYDPVPPIKTSRSSSMAE) is disordered.

The protein belongs to the UPF0161 family.

The protein resides in the cell inner membrane. Functionally, could be involved in insertion of integral membrane proteins into the membrane. The polypeptide is Putative membrane protein insertion efficiency factor (Azotobacter vinelandii (strain DJ / ATCC BAA-1303)).